We begin with the raw amino-acid sequence, 441 residues long: MQTELTFEQLENFSRKWRENPDKLVFQASIMKNGIKAATENPTSKVSIQPVFSHEVATDKVSNQQQSGRCWMFAALNTFRHKLNGTLGLKDFELSQNYTNFWDKLEKANYFLENIIETASEDEDSRLVSWLLDTPQQDGGQWDMLVSIIEKYGVVPKSAMPETFQSGKSADLNHLLNERLRTDAVILRKAFTEKKDTAGLKEEMLAEIYQLLVMTLGEPPKVFDFEYRNKDNEFKQELQITPKDFYERYVDMDLKNYIPLINAPTKDKPFNQAFTVDYLGNIVNGTPIKYLNVEMDVLKKAATDQIKDGETVWFGCDVGQLSEKTTGIMDTDIFLLNQTFGFKTAMTKAERLDYKHSMLTHAMVLTGVNVANGEVNRWKVENSWGEKIGNNGYFVASDAWMDEFTFQVVVHKKYLSKELIEAFNQEPIALKPWDPMGSLAL.

Active-site residues include Cys-70, His-361, and Asn-382.

The protein belongs to the peptidase C1 family.

It catalyses the reaction Inactivates bleomycin B2 (a cytotoxic glycometallopeptide) by hydrolysis of a carboxyamide bond of beta-aminoalanine, but also shows general aminopeptidase activity. The specificity varies somewhat with source, but amino acid arylamides of Met, Leu and Ala are preferred.. The polypeptide is Aminopeptidase C (pepC) (Listeria monocytogenes serovar 1/2a (strain ATCC BAA-679 / EGD-e)).